Reading from the N-terminus, the 165-residue chain is V-type proton ATPase 16 kDa proteolipid subunit (165 aa).

Residues Met1–Thr10 lie on the Lumenal side of the membrane. The helical transmembrane segment at Ala11–Gly33 threads the bilayer. Topologically, residues Thr34–Ser55 are cytoplasmic. Residues Ile56 to Ile76 traverse the membrane as a helical segment. Over Ser77–His95 the chain is Lumenal. The helical transmembrane segment at Leu96 to Gly117 threads the bilayer. Residues Asp118–Lys129 lie on the Cytoplasmic side of the membrane. Residues Leu130 to Leu155 form a helical membrane-spanning segment. Residues Ser156 to Asp165 lie on the Lumenal side of the membrane.

It belongs to the V-ATPase proteolipid subunit family. V-ATPase is a heteromultimeric enzyme composed of a peripheral catalytic V1 complex (main components: subunits A, B, C, D, E, and F) attached to an integral membrane V0 proton pore complex (main component: the proteolipid protein; which is present as a hexamer that forms the proton-conducting pore).

It localises to the vacuole membrane. Proton-conducting pore forming subunit of the membrane integral V0 complex of vacuolar ATPase. V-ATPase is responsible for acidifying a variety of intracellular compartments in eukaryotic cells. In Avena sativa (Oat), this protein is V-type proton ATPase 16 kDa proteolipid subunit (VATP-P1).